A 41-amino-acid polypeptide reads, in one-letter code: Large ribosomal subunit protein bL36 (41 aa).

The protein belongs to the bacterial ribosomal protein bL36 family.

The sequence is that of Large ribosomal subunit protein bL36 from Orientia tsutsugamushi (strain Boryong) (Rickettsia tsutsugamushi).